Reading from the N-terminus, the 104-residue chain is MFAVIRTGGKQYRVTPNAVLKVEKLEAEPGSTITFTDVLAVGGEGNLTIGAPVVAGASVTATVIAQDRLDKIVVFKKRRRQNSRRKNGHRQHVTVLRVGDIVAA.

The protein belongs to the bacterial ribosomal protein bL21 family. In terms of assembly, part of the 50S ribosomal subunit. Contacts protein L20.

Functionally, this protein binds to 23S rRNA in the presence of protein L20. This Granulibacter bethesdensis (strain ATCC BAA-1260 / CGDNIH1) protein is Large ribosomal subunit protein bL21.